A 546-amino-acid chain; its full sequence is Histidine--tRNA ligase, mitochondrial (546 aa).

The transit peptide at 1–20 directs the protein to the mitochondrion; it reads MLSRSLNKVVTSIKSSSIIR. Residues 129–131, Arg156, Gln172, Asp176, Arg326, and 330–331 each bind L-histidine; these read DLT and YY.

The protein belongs to the class-II aminoacyl-tRNA synthetase family.

It is found in the cytoplasm. The protein localises to the mitochondrion. It catalyses the reaction tRNA(His) + L-histidine + ATP = L-histidyl-tRNA(His) + AMP + diphosphate + H(+). Functionally, catalyzes the aminoacylation of histidyl-tRNA in both the cytoplasm and the mitochondrion. This Saccharomyces cerevisiae (strain ATCC 204508 / S288c) (Baker's yeast) protein is Histidine--tRNA ligase, mitochondrial (HTS1).